A 208-amino-acid polypeptide reads, in one-letter code: Large ribosomal subunit protein bL25 (208 aa).

It belongs to the bacterial ribosomal protein bL25 family. CTC subfamily. As to quaternary structure, part of the 50S ribosomal subunit; part of the 5S rRNA/L5/L18/L25 subcomplex. Contacts the 5S rRNA. Binds to the 5S rRNA independently of L5 and L18.

In terms of biological role, this is one of the proteins that binds to the 5S RNA in the ribosome where it forms part of the central protuberance. The sequence is that of Large ribosomal subunit protein bL25 from Bartonella quintana (strain Toulouse) (Rochalimaea quintana).